A 423-amino-acid polypeptide reads, in one-letter code: Isovaleryl-CoA dehydrogenase, mitochondrial (423 aa).

The N-terminal 29 residues, 1-29, are a transit peptide targeting the mitochondrion; that stretch reads MATATRLLGWRVASWRMRPPPAGFVSQRA. 3 positions are modified to N6-acetyllysine; alternate: K55, K64, and K75. K55, K64, and K75 each carry N6-succinyllysine; alternate. FAD is bound by residues 162–171 and 195–197; these read LAMSEPNAGS and WIT. S171 lines the substrate pocket. 219 to 220 provides a ligand contact to substrate; sequence SR. K238 is subject to N6-acetyllysine. K259 carries the post-translational modification N6-acetyllysine; alternate. Residue K259 is modified to N6-succinyllysine; alternate. Residues Y274 and 281–284 contribute to the substrate site; that span reads DLER. Catalysis depends on E283, which acts as the Proton acceptor. R309 serves as a coordination point for FAD. K315 is modified (N6-succinyllysine). FAD contacts are provided by residues Q320 and 377–381; that span reads QCFGG. 404 to 405 is a substrate binding site; the sequence is AG. An FAD-binding site is contributed by 406–408; it reads TSE.

It belongs to the acyl-CoA dehydrogenase family. Homotetramer. FAD serves as cofactor.

It localises to the mitochondrion matrix. It carries out the reaction 3-methylbutanoyl-CoA + oxidized [electron-transfer flavoprotein] + H(+) = 3-methylbut-2-enoyl-CoA + reduced [electron-transfer flavoprotein]. The catalysed reaction is pentanoyl-CoA + oxidized [electron-transfer flavoprotein] + H(+) = (2E)-pentenoyl-CoA + reduced [electron-transfer flavoprotein]. It catalyses the reaction hexanoyl-CoA + oxidized [electron-transfer flavoprotein] + H(+) = (2E)-hexenoyl-CoA + reduced [electron-transfer flavoprotein]. The enzyme catalyses butanoyl-CoA + oxidized [electron-transfer flavoprotein] + H(+) = (2E)-butenoyl-CoA + reduced [electron-transfer flavoprotein]. The protein operates within amino-acid degradation; L-leucine degradation; (S)-3-hydroxy-3-methylglutaryl-CoA from 3-isovaleryl-CoA: step 1/3. Catalyzes the conversion of isovaleryl-CoA/3-methylbutanoyl-CoA to 3-methylbut-2-enoyl-CoA as an intermediate step in the leucine (Leu) catabolic pathway. To a lesser extent, is also able to catalyze the oxidation of other saturated short-chain acyl-CoA thioesters as pentanoyl-CoA, hexenoyl-CoA and butenoyl-CoA. In Pongo abelii (Sumatran orangutan), this protein is Isovaleryl-CoA dehydrogenase, mitochondrial (IVD).